The primary structure comprises 516 residues: Histidine ammonia-lyase 1 (516 aa).

A cross-link (5-imidazolinone (Ser-Gly)) is located at residues 147–149 (SSG). A 2,3-didehydroalanine (Ser) modification is found at serine 148.

This sequence belongs to the PAL/histidase family. Post-translationally, contains an active site 4-methylidene-imidazol-5-one (MIO), which is formed autocatalytically by cyclization and dehydration of residues Ser-Ser-Gly.

The protein localises to the cytoplasm. The catalysed reaction is L-histidine = trans-urocanate + NH4(+). The protein operates within amino-acid degradation; L-histidine degradation into L-glutamate; N-formimidoyl-L-glutamate from L-histidine: step 1/3. The chain is Histidine ammonia-lyase 1 (hutH1) from Fusobacterium nucleatum subsp. nucleatum (strain ATCC 25586 / DSM 15643 / BCRC 10681 / CIP 101130 / JCM 8532 / KCTC 2640 / LMG 13131 / VPI 4355).